The sequence spans 946 residues: Bifunctional glutamine synthetase adenylyltransferase/adenylyl-removing enzyme (946 aa).

The segment at 1–440 is adenylyl removase; the sequence is MKPLSSPLQQ…VFNELIGDDE (440 aa). An adenylyl transferase region spans residues 449 to 946; the sequence is SEQWRELWQD…ASWQKWLVEE (498 aa).

The protein belongs to the GlnE family. Mg(2+) serves as cofactor.

It catalyses the reaction [glutamine synthetase]-O(4)-(5'-adenylyl)-L-tyrosine + phosphate = [glutamine synthetase]-L-tyrosine + ADP. The catalysed reaction is [glutamine synthetase]-L-tyrosine + ATP = [glutamine synthetase]-O(4)-(5'-adenylyl)-L-tyrosine + diphosphate. Its function is as follows. Involved in the regulation of glutamine synthetase GlnA, a key enzyme in the process to assimilate ammonia. When cellular nitrogen levels are high, the C-terminal adenylyl transferase (AT) inactivates GlnA by covalent transfer of an adenylyl group from ATP to specific tyrosine residue of GlnA, thus reducing its activity. Conversely, when nitrogen levels are low, the N-terminal adenylyl removase (AR) activates GlnA by removing the adenylyl group by phosphorolysis, increasing its activity. The regulatory region of GlnE binds the signal transduction protein PII (GlnB) which indicates the nitrogen status of the cell. This chain is Bifunctional glutamine synthetase adenylyltransferase/adenylyl-removing enzyme, found in Escherichia coli (strain SE11).